Here is a 270-residue protein sequence, read N- to C-terminus: SAMP-activating enzyme E1 (270 aa).

ATP is bound by residues Gly-42, Asp-63, 70–74 (SNLQR), and Lys-87. Residue Lys-113 forms a Glycyl lysine isopeptide (Lys-Gly) (interchain with G-Cter in SAMP2) linkage. 131–132 (DN) serves as a coordination point for ATP. 2 residues coordinate Zn(2+): Cys-171 and Cys-174. The active-site Glycyl thioester intermediate is Cys-188. The Zn(2+) site is built by Cys-245 and Cys-248.

This sequence belongs to the HesA/MoeB/ThiF family. Interacts with NcsA. Requires Zn(2+) as cofactor. Sampylated at Lys-113 with the archaeal ubiquitin-like protein SAMP2. Also sampylated with SAMP1.

It catalyses the reaction [small archaeal modifier protein]-C-terminal Gly-Gly + ATP + H(+) = [small archaeal modifier protein]-C-terminal Gly-Gly-AMP + diphosphate. Its function is as follows. Likely activates multiple ubiquitin-like SAMPs for protein conjugation as well as for sulfur transfer, via ATP-dependent adenylation at their C-terminus. In fact, it is required for the formation of all three SAMP1-, SAMP2- and SAMP3-protein conjugates, and for molybdenum cofactor (MoCo) biosynthesis and thiolation of tRNAs. In Haloferax volcanii (strain ATCC 29605 / DSM 3757 / JCM 8879 / NBRC 14742 / NCIMB 2012 / VKM B-1768 / DS2) (Halobacterium volcanii), this protein is SAMP-activating enzyme E1 (ubaA).